A 273-amino-acid polypeptide reads, in one-letter code: 29 kDa ribonucleoprotein A, chloroplastic (273 aa).

The transit peptide at 1 to 58 (MASSASSLHFLSLTPQTLPLPKPTSQTTSLSFFSLPPSSLNLSLSSSSSCFSSRFVRK) directs the protein to the chloroplast. The 79-residue stretch at 87–165 (LKIFVGNLPF…RALRVNSGPP (79 aa)) folds into the RRM 1 domain. The tract at residues 156–181 (RALRVNSGPPPEKRENSSFRGGSRGG) is disordered. The tract at residues 166 to 187 (PEKRENSSFRGGSRGGGSFDSS) is linker (Gly-rich). The RRM 2 domain occupies 188 to 266 (NRVYVGNLAW…RAIRVSPAEA (79 aa)).

Its subcellular location is the plastid. The protein localises to the chloroplast. Could be involved in splicing and/or processing of chloroplast RNA's. The protein is 29 kDa ribonucleoprotein A, chloroplastic of Nicotiana sylvestris (Wood tobacco).